We begin with the raw amino-acid sequence, 734 residues long: MAPSGTVADPPQCSTTDSFNSSDTAENDIRPFFVLHKASSGNHNGKLTGIVKSKRRIESPSPKIAKRSEVESVEEEDGQFFSTLRFKVFETVWSKIEKTIEDVLRNSNSKVFSGIHDWIRESFESIISSGALKLSEAVRSYPVLTQASSKQLLTAMVLTRNLEMVDDLLTFEELELHLKSQGCHVAKLSSMDFSAKSGVGGCLRGLLRQFVMPTVDVADVTILASWYRENKNHENPVVIIVDDTERCCGPVLSDLILILSEWAIKVPIFLIMGVSTAHDAPRKILSVNALQRLCATRFTLSSPAERMDAVLKAVFLKPCSGFTVSHKVALFMRSYFLCQDGTLTSFVRTLKIACLQHFSLEPLSIMLEHFCHDGVNQLSGEGTELLTEATMKHAFDLPSVTRNKITRSTFEMLPHFLLDLQRMPNPWSIVVLCLYEAGKFDKLRLLDIFCEILDPEARYLKYFSPSEIVNSQSHNSGRNNVIRRVLRKLRDLSPSQLSSMLKSWENLTAEFTEINDKVIELHPFMRAVEAAGQRQGLPNSPKKHASRSNSKLEKELKAMTDKVATVIEFMLREYMKPVESVPFHEILCFKNVDKLQSALLGDPRGRIQLDLLESHDILHCVCCSQRGTTLLPSMHDTSILYKLAQEHADVINLHDWYQSFKTILIPRSSKAKQKSKSSSKSKKRKEICEEPEAPAEALIQARFCRAVMELQITGLIRMPSKRRPDFVQRVAFGS.

Disordered regions lie at residues methionine 1 to alanine 25 and glycine 532 to lysine 554. Polar residues predominate over residues glutamine 12–threonine 24.

This sequence belongs to the ORC3 family. As to quaternary structure, component of the origin recognition complex (ORC) composed of at least ORC1 (ORC1A or ORC1B), ORC2, ORC3, ORC4, ORC5 and ORC6. ORC is regulated in a cell-cycle and development dependent manner. It is sequentially assembled at the exit from anaphase of mitosis and disassembled as cells enter S phase. Interacts directly with ORC1A, ORC2, ORC4, ORC5 and ORC6. Follow a cell-cycle regulation with a peak at the G1/S-phase. Mostly expressed in siliques and flowers, and, to a lower exent, in flower buds, leaves, roots and stems.

It localises to the nucleus. Component of the origin recognition complex (ORC) that binds origins of replication. DNA-binding is ATP-dependent. The specific DNA sequences that define origins of replication have not been identified yet. The protein is Origin of replication complex subunit 3 of Arabidopsis thaliana (Mouse-ear cress).